The following is a 196-amino-acid chain: Glycerol-3-phosphate acyltransferase (196 aa).

Helical transmembrane passes span 4–24 (LTLT…AILV), 56–76 (ATVL…AYFL), 80–100 (SLYL…PIFF), 114–134 (TLLP…VLVV), and 155–175 (VYFL…LILF).

The protein belongs to the PlsY family. Probably interacts with PlsX.

The protein resides in the cell inner membrane. The catalysed reaction is an acyl phosphate + sn-glycerol 3-phosphate = a 1-acyl-sn-glycero-3-phosphate + phosphate. The protein operates within lipid metabolism; phospholipid metabolism. Its function is as follows. Catalyzes the transfer of an acyl group from acyl-phosphate (acyl-PO(4)) to glycerol-3-phosphate (G3P) to form lysophosphatidic acid (LPA). This enzyme utilizes acyl-phosphate as fatty acyl donor, but not acyl-CoA or acyl-ACP. This Colwellia psychrerythraea (strain 34H / ATCC BAA-681) (Vibrio psychroerythus) protein is Glycerol-3-phosphate acyltransferase.